The primary structure comprises 418 residues: MDDQQLTIQQIQQLHMLLQQQQQQQQQQQQQQQQQQQQLQQQNFQLTPQNFQIPVNNNNNNNNNSNNNNNNETAFNITSQNNSIAANLNNDTNIINTTTTTTNNNNNNNNNNNNNNNNNNNNNNNNNNNNNNNTAPNQKFPTRKYKKQKDKLAELGIDVELSKKPTAAVKKKPPAKKSAKNAASQPTSPTLSTTNTSSAFTTAVLDTKKRKNQELLDYSDNSEESDSDEEDFENGDNENGDFPGGGDRKNRRLLKNREAAQLFRQRQKEYINSLESKASSLEASNTTALSKVSHLTEENQLMKDKVRYLKNFVKQAVSISLPMSVVNQDNINNLNNNLNGLQNQQNNNNNNNNNNNNNNNNNNNNNNNNNNNNNQNNFNNNNNNNINNNITFNNNNNNNSNNNNSNNIDSLLFNLPPD.

Residues 8-47 are a coiled coil; it reads IQQIQQLHMLLQQQQQQQQQQQQQQQQQQQQLQQQNFQLT. Low complexity-rich tracts occupy residues 51–71 and 95–134; these read FQIP…NNNN and INTT…NNNT. 4 disordered regions span residues 51-75, 95-149, 165-196, and 211-252; these read FQIP…ETAF, INTT…KKQK, PTAA…TTNT, and KNQE…KNRR. A compositionally biased stretch (basic residues) spans 169–179; the sequence is VKKKPPAKKSA. Over residues 180 to 196 the composition is skewed to low complexity; that stretch reads KNAASQPTSPTLSTTNT. A compositionally biased stretch (acidic residues) spans 220 to 239; the sequence is DNSEESDSDEEDFENGDNEN. The bZIP domain maps to 246–309; that stretch reads GDRKNRRLLK…QLMKDKVRYL (64 aa). A basic motif region spans residues 248-268; that stretch reads RKNRRLLKNREAAQLFRQRQK. A leucine-zipper region spans residues 274–281; sequence LESKASSL. A coiled-coil region spans residues 324–362; the sequence is SVVNQDNINNLNNNLNGLQNQQNNNNNNNNNNNNNNNNN. The interval 336–418 is disordered; that stretch reads NNLNGLQNQQ…DSLLFNLPPD (83 aa).

This sequence belongs to the bZIP family.

It localises to the nucleus. Functionally, probable transcriptional regulator. In Dictyostelium discoideum (Social amoeba), this protein is Probable basic-leucine zipper transcription factor E (bzpE).